The primary structure comprises 1473 residues: DNA topoisomerase 2 (1473 aa).

Positions 1 to 20 (MATKLPLQNSNAANVAKAPA) are disordered. The segment covering 9–20 (NSNAANVAKAPA) has biased composition (low complexity). ATP contacts are provided by residues Asn91, Asn120, 148–150 (SSN), and 161–168 (GRNGYGAK). The tract at residues 345–347 (NKK) is interaction with DNA. 378-380 (QTK) serves as a coordination point for ATP. One can recognise a Toprim domain in the interval 455–569 (CTLILTEGDS…SLLQVPSFLV (115 aa)). Glu461, Asp538, and Asp540 together coordinate Mg(2+). One can recognise a Topo IIA-type catalytic domain in the interval 704–1163 (IPSMVDGLKP…TPKSLWLSDL (460 aa)). The O-(5'-phospho-DNA)-tyrosine intermediate role is filled by Tyr794. The interaction with DNA stretch occupies residues 980 to 989 (KLTTTIATSN). Disordered regions lie at residues 1195-1230 (SGAAVKVKRQAPKKPAPKKTTKKASESETTEASYSA), 1242-1297 (KPKA…EVEE), and 1313-1473 (GSAP…EDDE). Basic residues-rich tracts occupy residues 1200 to 1216 (KVKRQAPKKPAPKKTTK) and 1278 to 1288 (PKGRQGAKKKA). Low complexity predominate over residues 1351–1360 (KPAATKAAKP). 2 stretches are compositionally biased toward polar residues: residues 1394-1404 (SPFNKKSSSVM) and 1417-1427 (ENVAGNSSSEK). Acidic residues predominate over residues 1453 to 1473 (SESESANDSEFDDIEDDEDDE).

The protein belongs to the type II topoisomerase family. As to quaternary structure, homodimer. The cofactor is Mg(2+). Mn(2+) is required as a cofactor. It depends on Ca(2+) as a cofactor.

It carries out the reaction ATP-dependent breakage, passage and rejoining of double-stranded DNA.. In terms of biological role, control of topological states of DNA by transient breakage and subsequent rejoining of DNA strands. Topoisomerase II makes double-strand breaks. In Arabidopsis thaliana (Mouse-ear cress), this protein is DNA topoisomerase 2 (TOP2).